The chain runs to 99 residues: Meromycolate extension acyl carrier protein (99 aa).

Positions A3–E81 constitute a Carrier domain. An O-(pantetheine 4'-phosphoryl)serine modification is found at S41. An Isoglutamyl lysine isopeptide (Lys-Gln) (interchain with Q-Cter in protein Pup) cross-link involves residue K79.

This sequence belongs to the acyl carrier protein (ACP) family. 4'-phosphopantetheine is transferred from CoA to a specific serine of apo-AcpM.

The protein resides in the cytoplasm. In terms of biological role, acyl carrier protein involved in meromycolate extension. This is Meromycolate extension acyl carrier protein (acpM) from Mycolicibacterium smegmatis (strain ATCC 700084 / mc(2)155) (Mycobacterium smegmatis).